We begin with the raw amino-acid sequence, 68 residues long: Protein SrnB (68 aa).

A helical membrane pass occupies residues 23–42 (YALIGLLAVCATVLCFSLIF).

The protein belongs to the Hok/Gef family.

Its subcellular location is the cell inner membrane. In terms of biological role, toxic component of a type I toxin-antitoxin (TA) system. Its normal function is believed to be effective plasmid stabilization through postsegregational killing of cells that have lost the F plasmid. Promotes degradation of stable RNA in E.coli. The chain is Protein SrnB (srnB) from Escherichia coli (strain K12).